A 360-amino-acid chain; its full sequence is D-xylose 1-dehydrogenase [NADP(+)] (360 aa).

This sequence belongs to the Gfo/Idh/MocA family. Homotretramer.

The catalysed reaction is D-xylofuranose + NADP(+) = D-xylono-1,4-lactone + NADPH + H(+). Its function is as follows. NADP-dependent D-xylose dehydrogenase involved in the degradation of D-xylose, a major component of hemicelluloses such as xylan. In addition to D-xylose, oxidizes D-ribose at similar kinetic constants, whereas D-glucose is oxidized with about 70-fold lower catalytic efficiency. This chain is D-xylose 1-dehydrogenase [NADP(+)] (gfo6), found in Haloarcula marismortui (strain ATCC 43049 / DSM 3752 / JCM 8966 / VKM B-1809) (Halobacterium marismortui).